Here is a 418-residue protein sequence, read N- to C-terminus: Serpin A3-8 (418 aa).

The first 25 residues, 1-25 (MRAERMSPLLALGLLVSGLCSRVHC), serve as a signal peptide directing secretion. Asn-103, Asn-183, Asn-233, and Asn-268 each carry an N-linked (GlcNAc...) asparagine glycan.

The protein belongs to the serpin family. As to quaternary structure, homodimer.

The protein localises to the cytoplasmic vesicle. Its subcellular location is the secretory vesicle. The protein resides in the chromaffin granule. It localises to the secreted. Functionally, serine protease inhibitor. The protein is Serpin A3-8 of Bos taurus (Bovine).